We begin with the raw amino-acid sequence, 426 residues long: Serine--tRNA ligase (426 aa).

229–231 (TAE) lines the L-serine pocket. ATP is bound at residue 260–262 (RSE). Glutamate 283 serves as a coordination point for L-serine. 347-350 (EIAS) is an ATP binding site. Serine 383 provides a ligand contact to L-serine.

This sequence belongs to the class-II aminoacyl-tRNA synthetase family. Type-1 seryl-tRNA synthetase subfamily. In terms of assembly, homodimer. The tRNA molecule binds across the dimer.

It localises to the cytoplasm. It carries out the reaction tRNA(Ser) + L-serine + ATP = L-seryl-tRNA(Ser) + AMP + diphosphate + H(+). The catalysed reaction is tRNA(Sec) + L-serine + ATP = L-seryl-tRNA(Sec) + AMP + diphosphate + H(+). It participates in aminoacyl-tRNA biosynthesis; selenocysteinyl-tRNA(Sec) biosynthesis; L-seryl-tRNA(Sec) from L-serine and tRNA(Sec): step 1/1. Catalyzes the attachment of serine to tRNA(Ser). Is also able to aminoacylate tRNA(Sec) with serine, to form the misacylated tRNA L-seryl-tRNA(Sec), which will be further converted into selenocysteinyl-tRNA(Sec). The sequence is that of Serine--tRNA ligase from Rickettsia bellii (strain OSU 85-389).